The following is a 378-amino-acid chain: Ribosomal RNA large subunit methyltransferase G (378 aa).

Belongs to the methyltransferase superfamily. RlmG family.

Its subcellular location is the cytoplasm. The enzyme catalyses guanosine(1835) in 23S rRNA + S-adenosyl-L-methionine = N(2)-methylguanosine(1835) in 23S rRNA + S-adenosyl-L-homocysteine + H(+). In terms of biological role, specifically methylates the guanine in position 1835 (m2G1835) of 23S rRNA. This Salmonella arizonae (strain ATCC BAA-731 / CDC346-86 / RSK2980) protein is Ribosomal RNA large subunit methyltransferase G.